Here is a 388-residue protein sequence, read N- to C-terminus: MKIHEYQGKEILRKFGVAVPRGKPAFSVDEAVKVAEELGGPVWVVKAQIHAGGRGKGGGVKVAKSLDQVREYANQILGMQLKTHQTGPEGQKVNRLLIEEGADIKKELYVGIVIDRVSQKVVVMASSEGGMDIEEVAEKTPEAIHKVAVEPSTGLQDAEADDLAKKIGVPDASIPQAREILKGLYKSFWETDASLAEINPLVLTGDGKVIALDAKFNFDSNALFRHPEIVAYRDLDEEDPAEIEASKFDLAYISLDGNIGCLVNGAGLAMATMDTIKLFGGEPANFLDVGGGATTEKVTEAFKLMLKNPGLKAILVNIFGGIMRCDVIAEGVIAGSKAVNLNVPLVVRMKGTNEDLGKKMLAESGLPIISADSMEEAAQKVVAAAAGK.

An ATP-grasp domain is found at 9–244; the sequence is KEILRKFGVA…LDEEDPAEIE (236 aa). Residues Lys-46, 53-55, Glu-99, Ala-102, and Glu-107 each bind ATP; that span reads GRG. Asn-199 and Asp-213 together coordinate Mg(2+). Substrate-binding positions include Asn-264 and 321-323; that span reads GIM.

It belongs to the succinate/malate CoA ligase beta subunit family. As to quaternary structure, heterotetramer of two alpha and two beta subunits. Mg(2+) serves as cofactor.

It catalyses the reaction succinate + ATP + CoA = succinyl-CoA + ADP + phosphate. The catalysed reaction is GTP + succinate + CoA = succinyl-CoA + GDP + phosphate. It participates in carbohydrate metabolism; tricarboxylic acid cycle; succinate from succinyl-CoA (ligase route): step 1/1. Its function is as follows. Succinyl-CoA synthetase functions in the citric acid cycle (TCA), coupling the hydrolysis of succinyl-CoA to the synthesis of either ATP or GTP and thus represents the only step of substrate-level phosphorylation in the TCA. The beta subunit provides nucleotide specificity of the enzyme and binds the substrate succinate, while the binding sites for coenzyme A and phosphate are found in the alpha subunit. The polypeptide is Succinate--CoA ligase [ADP-forming] subunit beta (Burkholderia thailandensis (strain ATCC 700388 / DSM 13276 / CCUG 48851 / CIP 106301 / E264)).